The sequence spans 146 residues: 3-hydroxyacyl-[acyl-carrier-protein] dehydratase FabZ (146 aa).

Residue His48 is part of the active site.

It belongs to the thioester dehydratase family. FabZ subfamily.

The protein resides in the cytoplasm. The catalysed reaction is a (3R)-hydroxyacyl-[ACP] = a (2E)-enoyl-[ACP] + H2O. Its function is as follows. Involved in unsaturated fatty acids biosynthesis. Catalyzes the dehydration of short chain beta-hydroxyacyl-ACPs and long chain saturated and unsaturated beta-hydroxyacyl-ACPs. The sequence is that of 3-hydroxyacyl-[acyl-carrier-protein] dehydratase FabZ from Campylobacter lari (strain RM2100 / D67 / ATCC BAA-1060).